The primary structure comprises 875 residues: Alanine--tRNA ligase (875 aa).

Zn(2+) contacts are provided by H564, H568, C666, and H670.

Belongs to the class-II aminoacyl-tRNA synthetase family. Requires Zn(2+) as cofactor.

Its subcellular location is the cytoplasm. The enzyme catalyses tRNA(Ala) + L-alanine + ATP = L-alanyl-tRNA(Ala) + AMP + diphosphate. In terms of biological role, catalyzes the attachment of alanine to tRNA(Ala) in a two-step reaction: alanine is first activated by ATP to form Ala-AMP and then transferred to the acceptor end of tRNA(Ala). Also edits incorrectly charged Ser-tRNA(Ala) and Gly-tRNA(Ala) via its editing domain. The polypeptide is Alanine--tRNA ligase (Mannheimia succiniciproducens (strain KCTC 0769BP / MBEL55E)).